A 345-amino-acid chain; its full sequence is Phosphoribosylformylglycinamidine cyclo-ligase (345 aa).

This sequence belongs to the AIR synthase family.

The protein localises to the cytoplasm. It catalyses the reaction 2-formamido-N(1)-(5-O-phospho-beta-D-ribosyl)acetamidine + ATP = 5-amino-1-(5-phospho-beta-D-ribosyl)imidazole + ADP + phosphate + H(+). It functions in the pathway purine metabolism; IMP biosynthesis via de novo pathway; 5-amino-1-(5-phospho-D-ribosyl)imidazole from N(2)-formyl-N(1)-(5-phospho-D-ribosyl)glycinamide: step 2/2. The polypeptide is Phosphoribosylformylglycinamidine cyclo-ligase (Actinobacillus succinogenes (strain ATCC 55618 / DSM 22257 / CCUG 43843 / 130Z)).